The following is a 722-amino-acid chain: Methionine--tRNA ligase (722 aa).

The 'HIGH' region motif lies at 11 to 21 (PYANGPIHAGH). 4 residues coordinate Zn(2+): Cys143, Cys146, Cys156, and Cys159. The 'KMSKS' region signature appears at 344 to 348 (KFSTS). Thr347 contacts ATP. A tRNA-binding domain is found at 622 to 722 (DFAKLDLRVG…KEVKLGAKVR (101 aa)).

It belongs to the class-I aminoacyl-tRNA synthetase family. MetG type 1 subfamily. In terms of assembly, homodimer. It depends on Zn(2+) as a cofactor.

The protein localises to the cytoplasm. It carries out the reaction tRNA(Met) + L-methionine + ATP = L-methionyl-tRNA(Met) + AMP + diphosphate. Is required not only for elongation of protein synthesis but also for the initiation of all mRNA translation through initiator tRNA(fMet) aminoacylation. The protein is Methionine--tRNA ligase of Pyrococcus abyssi (strain GE5 / Orsay).